The following is a 506-amino-acid chain: GMP synthase [glutamine-hydrolyzing] (506 aa).

The Glutamine amidotransferase type-1 domain maps to 4–192 (KLIILDFGSQ…FLDICGMKRD (189 aa)). Cysteine 79 (nucleophile) is an active-site residue. Residues histidine 167 and glutamate 169 contribute to the active site. The GMPS ATP-PPase domain maps to 193 to 381 (WTPASFIEAT…LGMMPHLIHR (189 aa)). 220–226 (SGGVDSS) is an ATP binding site.

In terms of assembly, homodimer.

It carries out the reaction XMP + L-glutamine + ATP + H2O = GMP + L-glutamate + AMP + diphosphate + 2 H(+). The protein operates within purine metabolism; GMP biosynthesis; GMP from XMP (L-Gln route): step 1/1. In terms of biological role, catalyzes the synthesis of GMP from XMP. In Porphyromonas gingivalis (strain ATCC 33277 / DSM 20709 / CIP 103683 / JCM 12257 / NCTC 11834 / 2561), this protein is GMP synthase [glutamine-hydrolyzing].